The following is a 409-amino-acid chain: MIPGNRMLMVVLLCQVLLGGASHASLIPETGKKKVAEIQGHAGGRRSGQSHELLRDFEATLLQMFGLRRRPQPSKSAVIPDYMRDLYRLQSGEEEEEEQIQGIGLEYPERPASRANTVRSFHHEEHLENIPGTSENSAFRFLFNLSSIPENEVISSAELRLFREQVDQGPDWDQGFHRINIYEVMKPPAEVVPGHLITRLLDTRLVHHNVTRWETFDVSPAVLRWTREKQPNYGLAIEVTHLHQTRTHQGQHVRISRSLPQGSGDWAQLRPLLVTFGHDGRGHALTRRRRAKRSPKHHPQRARKKNKNCRRHSLYVDFSDVGWNDWIVAPPGYQAFYCHGDCPFPLADHLNSTNHAIVQTLVNSVNSSIPKACCVPTELSAISMLYLDEYDKVVLKNYQEMVVEGCGCR.

The signal sequence occupies residues 1 to 24; it reads MIPGNRMLMVVLLCQVLLGGASHA. A propeptide spanning residues 25–293 is cleaved from the precursor; sequence SLIPETGKKK…ALTRRRRAKR (269 aa). Ser91 bears the Phosphoserine mark. Asn144 and Asn209 each carry an N-linked (GlcNAc...) asparagine glycan. The interval 284–308 is disordered; the sequence is ALTRRRRAKRSPKHHPQRARKKNKN. 3 disulfides stabilise this stretch: Cys309-Cys374, Cys338-Cys406, and Cys342-Cys408. Asn351 and Asn366 each carry an N-linked (GlcNAc...) asparagine glycan.

This sequence belongs to the TGF-beta family. As to quaternary structure, homodimer; disulfide-linked. Interacts with GREM2. Part of a complex consisting of TWSG1 and CHRD. Interacts with the serine proteases, HTRA1 and HTRA3; the interaction with either inhibits BMP4-mediated signaling. The HTRA protease activity is required for this inhibition. Interacts with SOSTDC1. Interacts with FBN1 (via N-terminal domain) and FBN2. Interacts with type I receptor BMPR1A. Interacts with type II receptor BMPR2. Interacts with FSTL1; this interaction inhibits the activation of the BMP4/Smad1/5/8 signaling pathway. Interacts with SCUBE3. Interacts with TGFBR3.

It is found in the secreted. The protein localises to the extracellular space. It localises to the extracellular matrix. Functionally, growth factor of the TGF-beta superfamily that plays essential roles in many developmental processes, including neurogenesis, vascular development, angiogenesis and osteogenesis. Acts in concert with PTHLH/PTHRP to stimulate ductal outgrowth during embryonic mammary development and to inhibit hair follicle induction. Initiates the canonical BMP signaling cascade by associating with type I receptor BMPR1A and type II receptor BMPR2. Once all three components are bound together in a complex at the cell surface, BMPR2 phosphorylates and activates BMPR1A. In turn, BMPR1A propagates signal by phosphorylating SMAD1/5/8 that travel to the nucleus and act as activators and repressors of transcription of target genes. Positively regulates the expression of odontogenic development regulator MSX1 via inducing the IPO7-mediated import of SMAD1 to the nucleus. Required for MSX1-mediated mesenchymal molar tooth bud development beyond the bud stage, via promoting Wnt signaling. Acts as a positive regulator of odontoblast differentiation during mesenchymal tooth germ formation, expression is repressed during the bell stage by MSX1-mediated inhibition of CTNNB1 signaling. Able to induce its own expression in dental mesenchymal cells and also in the neighboring dental epithelial cells via an MSX1-mediated pathway. Can also signal through non-canonical BMP pathways such as ERK/MAP kinase, PI3K/Akt, or SRC cascades. For example, induces SRC phosphorylation which, in turn, activates VEGFR2, leading to an angiogenic response. This is Bone morphogenetic protein 4 from Bos taurus (Bovine).